An 85-amino-acid polypeptide reads, in one-letter code: uncharacterized protein (85 aa).

The protein resides in the mitochondrion. This is an uncharacterized protein from Paramecium tetraurelia.